The primary structure comprises 177 residues: Large ribosomal subunit protein uL6 (177 aa).

This sequence belongs to the universal ribosomal protein uL6 family. Part of the 50S ribosomal subunit.

In terms of biological role, this protein binds to the 23S rRNA, and is important in its secondary structure. It is located near the subunit interface in the base of the L7/L12 stalk, and near the tRNA binding site of the peptidyltransferase center. This Paracoccus denitrificans (strain Pd 1222) protein is Large ribosomal subunit protein uL6.